Reading from the N-terminus, the 90-residue chain is MALSKDKKTEIIKKFQKNDADVGSVFVQVAVLTEEIKLLTEHLLKNKKDFISKRGLYTKVSKRKNLLNYLKQNDLNAYRNLISELELRHS.

Belongs to the universal ribosomal protein uS15 family. As to quaternary structure, part of the 30S ribosomal subunit. Forms a bridge to the 50S subunit in the 70S ribosome, contacting the 23S rRNA.

Its function is as follows. One of the primary rRNA binding proteins, it binds directly to 16S rRNA where it helps nucleate assembly of the platform of the 30S subunit by binding and bridging several RNA helices of the 16S rRNA. Forms an intersubunit bridge (bridge B4) with the 23S rRNA of the 50S subunit in the ribosome. This chain is Small ribosomal subunit protein uS15, found in Mycoplasmoides gallisepticum (strain R(low / passage 15 / clone 2)) (Mycoplasma gallisepticum).